The sequence spans 183 residues: uncharacterized protein (183 aa).

An N-terminal signal peptide occupies residues 1–17; the sequence is MVLFILVLYTCIQDGNG.

This is an uncharacterized protein from Saccharomyces cerevisiae (strain ATCC 204508 / S288c) (Baker's yeast).